The sequence spans 230 residues: Vacuole-localized protein 4 (230 aa).

A signal peptide spans 1–19 (MRVSSAIFTIASGIAAVSA).

It localises to the vacuole. In terms of biological role, vacuolar protein required for aerial conidiation and conidial maturation. Also involved in blastospore production and cell cycle. Plays a vital role in the secretion of Pr1 proteases for cuticular penetration and hence contributes significantly to host infection and virulence. This chain is Vacuole-localized protein 4, found in Beauveria bassiana (strain ARSEF 2860) (White muscardine disease fungus).